Reading from the N-terminus, the 149-residue chain is Large ribosomal subunit protein uL13 (149 aa).

It belongs to the universal ribosomal protein uL13 family. As to quaternary structure, part of the 50S ribosomal subunit.

In terms of biological role, this protein is one of the early assembly proteins of the 50S ribosomal subunit, although it is not seen to bind rRNA by itself. It is important during the early stages of 50S assembly. The sequence is that of Large ribosomal subunit protein uL13 from Borrelia hermsii (strain HS1 / DAH).